Reading from the N-terminus, the 633-residue chain is Acetylcholinesterase (633 aa).

Positions 1–23 are cleaved as a signal peptide; sequence MKILDALLFPVIFIMFFIHLSIA. A disulfide bond links C91 and C118. N-linked (GlcNAc...) asparagine glycans are attached at residues N133 and N184. S225 serves as the catalytic Acyl-ester intermediate. A disulfide bridge connects residues C279 and C290. N283 carries N-linked (GlcNAc...) asparagine glycosylation. E352 functions as the Charge relay system in the catalytic mechanism. An N-linked (GlcNAc...) asparagine glycan is attached at N368. Cysteines 427 and 579 form a disulfide. H494 serves as the catalytic Charge relay system. N511 and N591 each carry an N-linked (GlcNAc...) asparagine glycan.

The protein belongs to the type-B carboxylesterase/lipase family.

The protein resides in the synapse. The protein localises to the secreted. Its subcellular location is the cell membrane. It carries out the reaction acetylcholine + H2O = choline + acetate + H(+). Its function is as follows. Terminates signal transduction at the neuromuscular junction by rapid hydrolysis of the acetylcholine released into the synaptic cleft. This is Acetylcholinesterase (ache) from Electrophorus electricus (Electric eel).